The sequence spans 258 residues: Phosphonates import ATP-binding protein PhnC 1 (258 aa).

Residues 2–246 enclose the ABC transporter domain; the sequence is IEFKDVGLVY…TFEEIYGRSI (245 aa). 35 to 42 serves as a coordination point for ATP; sequence GLSGAGKS.

It belongs to the ABC transporter superfamily. Phosphonates importer (TC 3.A.1.9.1) family. The complex is composed of two ATP-binding proteins (PhnC), two transmembrane proteins (PhnE) and a solute-binding protein (PhnD).

The protein localises to the cell membrane. The enzyme catalyses phosphonate(out) + ATP + H2O = phosphonate(in) + ADP + phosphate + H(+). Functionally, part of the ABC transporter complex PhnCDE involved in phosphonates import. Responsible for energy coupling to the transport system. The polypeptide is Phosphonates import ATP-binding protein PhnC 1 (Oceanobacillus iheyensis (strain DSM 14371 / CIP 107618 / JCM 11309 / KCTC 3954 / HTE831)).